The primary structure comprises 328 residues: Diacetylchitobiose uptake system permease protein DasB (328 aa).

The segment at 1 to 27 is disordered; sequence MTVQTERPPSGPSDVRKADGGGTGGTR. The next 6 helical transmembrane spans lie at 36-56, 104-124, 134-154, 188-208, 247-267, and 297-317; these read ALAPYLLLLPAAAATVLLLGW, IIFTAVNVVLTMVVGGLIGLL, FVLMIGLVLAWAMPVVAATTV, FSTFFVVTVLIVWMSVPFVAI, FLYATTFLEVIWIFKAFVQVY, and MGAAIAVLTILILLGLTAYYL. Positions 100–316 constitute an ABC transmembrane type-1 domain; sequence TVRSIIFTAV…LILLGLTAYY (217 aa).

The protein belongs to the binding-protein-dependent transport system permease family. In terms of assembly, the complex is composed of two ATP-binding proteins (MsiK), two transmembrane proteins (DasB and DasC) and a solute-binding protein (DasA).

It localises to the cell membrane. Part of the ABC transporter complex DasABC-MsiK involved in N,N'-diacetylchitobiose ((GlcNAc)2) uptake. Responsible for the translocation of the substrate across the membrane. The chain is Diacetylchitobiose uptake system permease protein DasB from Streptomyces coelicolor (strain ATCC BAA-471 / A3(2) / M145).